The sequence spans 100 residues: Large ribosomal subunit protein uL23 (100 aa).

It belongs to the universal ribosomal protein uL23 family. In terms of assembly, part of the 50S ribosomal subunit. Contacts protein L29, and trigger factor when it is bound to the ribosome.

One of the early assembly proteins it binds 23S rRNA. One of the proteins that surrounds the polypeptide exit tunnel on the outside of the ribosome. Forms the main docking site for trigger factor binding to the ribosome. This is Large ribosomal subunit protein uL23 from Shewanella frigidimarina (strain NCIMB 400).